We begin with the raw amino-acid sequence, 399 residues long: Argininosuccinate synthase (399 aa).

9–17 lines the ATP pocket; the sequence is AYSGGLDTS. An L-citrulline-binding site is contributed by Tyr-85. An ATP-binding site is contributed by Gly-115. Residues Thr-117, Asn-121, and Asp-122 each contribute to the L-aspartate site. Residue Asn-121 coordinates L-citrulline. 4 residues coordinate L-citrulline: Arg-125, Ser-173, Glu-258, and Tyr-270.

This sequence belongs to the argininosuccinate synthase family. Type 1 subfamily. In terms of assembly, homotetramer.

It is found in the cytoplasm. It carries out the reaction L-citrulline + L-aspartate + ATP = 2-(N(omega)-L-arginino)succinate + AMP + diphosphate + H(+). Its pathway is amino-acid biosynthesis; L-arginine biosynthesis; L-arginine from L-ornithine and carbamoyl phosphate: step 2/3. The chain is Argininosuccinate synthase from Streptococcus uberis (strain ATCC BAA-854 / 0140J).